A 123-amino-acid chain; its full sequence is Mediator of RNA polymerase II transcription subunit 9 (123 aa).

A coiled-coil region spans residues 95–123 (WQLHIQEKKIELEKKTKHLQRLRESIQKQ).

This sequence belongs to the Mediator complex subunit 9 family. In terms of assembly, component of the Mediator complex.

It is found in the nucleus. Its function is as follows. Component of the Mediator complex, a coactivator involved in the regulated transcription of nearly all RNA polymerase II-dependent genes. Mediator functions as a bridge to convey information from gene-specific regulatory proteins to the basal RNA polymerase II transcription machinery. Mediator is recruited to promoters by direct interactions with regulatory proteins and serves as a scaffold for the assembly of a functional preinitiation complex with RNA polymerase II and the general transcription factors. This chain is Mediator of RNA polymerase II transcription subunit 9 (CSE2), found in Kluyveromyces lactis (strain ATCC 8585 / CBS 2359 / DSM 70799 / NBRC 1267 / NRRL Y-1140 / WM37) (Yeast).